The sequence spans 406 residues: Nuclear hormone receptor family member nhr-133 (406 aa).

A DNA-binding region (nuclear receptor) is located at residues 8–83 (SGPCEICEQP…VGMNSSKFQN (76 aa)). The NR C4-type zinc finger occupies 11-31 (CEICEQPAHGNHFGVLSCRAC). The NR C4-type; degenerate zinc finger occupies 47–66 (DRVCRKGNCIGNDLYRCKIC). One can recognise an NR LBD domain in the interval 150 to 406 (YSWSPNHYPN…YSHPEMFEFS (257 aa)).

The protein belongs to the nuclear hormone receptor family.

The protein resides in the nucleus. Functionally, orphan nuclear receptor. The sequence is that of Nuclear hormone receptor family member nhr-133 from Caenorhabditis elegans.